We begin with the raw amino-acid sequence, 149 residues long: Glutamate mutase sigma subunit (149 aa).

The 138-residue stretch at 3 to 140 folds into the B12-binding domain; the sequence is KATLVIGVIG…AHDINQRHDV (138 aa). Adenosylcob(III)alamin is bound by residues 13 to 17, H16, 61 to 63, and 93 to 97; these read ADCHA, SSI, and NLVVG.

It belongs to the methylaspartate mutase GlmS subunit family. Heterotetramer composed of 2 epsilon subunits (GlmE) and 2 sigma subunits (GlmS). GlmE exists as a homodimer and GlmS as a monomer. It depends on adenosylcob(III)alamin as a cofactor.

It carries out the reaction (2S,3S)-3-methyl-L-aspartate = L-glutamate. Its pathway is amino-acid degradation; L-glutamate degradation via mesaconate pathway; acetate and pyruvate from L-glutamate: step 1/4. Its function is as follows. Catalyzes the carbon skeleton rearrangement of L-glutamate to L-threo-3-methylaspartate ((2S,3S)-3-methylaspartate). This is Glutamate mutase sigma subunit from Escherichia coli O157:H7.